The following is a 103-amino-acid chain: uncharacterized protein (103 aa).

2 helical membrane-spanning segments follow: residues 13-33 and 77-97; these read LLPF…YCIL and FSIY…PYLF.

It localises to the endoplasmic reticulum membrane. This is an uncharacterized protein from Schizosaccharomyces pombe (strain 972 / ATCC 24843) (Fission yeast).